A 255-amino-acid chain; its full sequence is Ribosomal RNA small subunit methyltransferase A (255 aa).

Positions 13, 15, 40, 61, 85, and 103 each coordinate S-adenosyl-L-methionine.

It belongs to the class I-like SAM-binding methyltransferase superfamily. rRNA adenine N(6)-methyltransferase family. RsmA subfamily.

Its subcellular location is the cytoplasm. It carries out the reaction adenosine(1518)/adenosine(1519) in 16S rRNA + 4 S-adenosyl-L-methionine = N(6)-dimethyladenosine(1518)/N(6)-dimethyladenosine(1519) in 16S rRNA + 4 S-adenosyl-L-homocysteine + 4 H(+). In terms of biological role, specifically dimethylates two adjacent adenosines (A1518 and A1519) in the loop of a conserved hairpin near the 3'-end of 16S rRNA in the 30S particle. May play a critical role in biogenesis of 30S subunits. This chain is Ribosomal RNA small subunit methyltransferase A, found in Dechloromonas aromatica (strain RCB).